The chain runs to 469 residues: Protein apterous (469 aa).

Disordered stretches follow at residues 21-44 (GPGAREKSPTPPVAHQGSNQCGSA) and 111-141 (EVSDETTSGISFKTEPFGPPSSPESTSDSKI). 2 LIM zinc-binding domains span residues 148-200 (CSGC…CKND) and 210-263 (CSRC…CRTH). Residues 367–426 (TKRMRTSFKHHQLRTMKSYFAINHNPDAKDLKQLSQKTGLPKRVLQVWFQNARAKWRRMM) constitute a DNA-binding region (homeobox).

Expressed in PNS and CNS.

It is found in the nucleus. Functionally, required for the normal development of the wing and halter imaginal disks. The sequence is that of Protein apterous (ap) from Drosophila melanogaster (Fruit fly).